The following is a 483-amino-acid chain: Glutamyl-tRNA(Gln) amidotransferase subunit A (483 aa).

Residues lysine 76 and serine 151 each act as charge relay system in the active site. Residue serine 175 is the Acyl-ester intermediate of the active site.

It belongs to the amidase family. GatA subfamily. As to quaternary structure, heterotrimer of A, B and C subunits.

It catalyses the reaction L-glutamyl-tRNA(Gln) + L-glutamine + ATP + H2O = L-glutaminyl-tRNA(Gln) + L-glutamate + ADP + phosphate + H(+). In terms of biological role, allows the formation of correctly charged Gln-tRNA(Gln) through the transamidation of misacylated Glu-tRNA(Gln) in organisms which lack glutaminyl-tRNA synthetase. The reaction takes place in the presence of glutamine and ATP through an activated gamma-phospho-Glu-tRNA(Gln). The sequence is that of Glutamyl-tRNA(Gln) amidotransferase subunit A from Nitrosospira multiformis (strain ATCC 25196 / NCIMB 11849 / C 71).